We begin with the raw amino-acid sequence, 347 residues long: Haptoglobin (347 aa).

A signal peptide spans 1-18 (MRALGAVITLLLWGQLFA). The region spanning 31–88 (DSCPKPPEIANGYVEHLVRYQCKNYYRLRTEGDGVYALNSEKQWVNKAVGEQLPECEA) is the Sushi domain. Intrachain disulfides connect cysteine 52-cysteine 86 and cysteine 90-cysteine 207. The 243-residue stretch at 103-345 (IIGGSLDAKG…ILDWIQKTIA (243 aa)) folds into the Peptidase S1 domain. N-linked (GlcNAc...) asparagine glycosylation is found at asparagine 148, asparagine 152, asparagine 182, asparagine 230, and asparagine 256. Intrachain disulfides connect cysteine 250-cysteine 281 and cysteine 292-cysteine 322. Residues 259–264 (VPENKI) are interaction with CD163.

It belongs to the peptidase S1 family. Tetramer of two alpha and two beta chains; disulfide-linked. The hemoglobin/haptoglobin complex is composed of a haptoglobin dimer bound to two hemoglobin alpha-beta dimers. Interacts with CD163. Interacts with ERGIC3. In terms of tissue distribution, expressed by the liver and secreted in plasma.

The protein resides in the secreted. Its function is as follows. As a result of hemolysis, hemoglobin is found to accumulate in the kidney and is secreted in the urine. Haptoglobin captures, and combines with free plasma hemoglobin to allow hepatic recycling of heme iron and to prevent kidney damage. Haptoglobin also acts as an antioxidant, has antibacterial activity and plays a role in modulating many aspects of the acute phase response. Hemoglobin/haptoglobin complexes are rapidly cleared by the macrophage CD163 scavenger receptor expressed on the surface of liver Kupfer cells through an endocytic lysosomal degradation pathway. The chain is Haptoglobin (HP) from Oryctolagus cuniculus (Rabbit).